A 438-amino-acid polypeptide reads, in one-letter code: AP-2 complex subunit mu (438 aa).

Residues 177 to 437 (KNEVFLDIVE…ITKAGSYEIR (261 aa)) form the MHD domain.

The protein belongs to the adaptor complexes medium subunit family. In terms of assembly, adaptor protein complex 2 (AP-2) is a heterotetramer composed of two large adaptins (alpha-type and beta-type subunits), a medium adaptin (mu-type subunit) and a small adaptin (sigma-type subunit).

It is found in the cell membrane. The protein resides in the membrane. The protein localises to the coated pit. It localises to the golgi apparatus. Its subcellular location is the trans-Golgi network membrane. Subunit of the adaptor protein complex 2 (AP-2). Adaptor protein complexes function in protein transport via transport vesicles in different membrane traffic pathways. Adaptor protein complexes are vesicle coat components and appear to be involved in cargo selection and vesicle formation. AP-2 is involved in clathrin-dependent endocytosis in which cargo proteins are incorporated into vesicles surrounded by clathrin (clathrin-coated vesicles, CCVs) which are destined for fusion with the early endosome. AP-2 recognizes Y-X-X-Phi endocytosis signal motif within the cytosolic tails of transmembrane cargo molecules. The complex binds polyphosphoinositides. This chain is AP-2 complex subunit mu (AP2M), found in Arabidopsis thaliana (Mouse-ear cress).